Consider the following 183-residue polypeptide: Small ribosomal subunit protein uS4 (183 aa).

An S4 RNA-binding domain is found at 106–168 (RRLQTQVYRQ…AGSPLAREGH (63 aa)).

This sequence belongs to the universal ribosomal protein uS4 family. Part of the 30S ribosomal subunit. Contacts protein S5. The interaction surface between S4 and S5 is involved in control of translational fidelity.

Functionally, one of the primary rRNA binding proteins, it binds directly to 16S rRNA where it nucleates assembly of the body of the 30S subunit. With S5 and S12 plays an important role in translational accuracy. This is Small ribosomal subunit protein uS4 from Methanothrix thermoacetophila (strain DSM 6194 / JCM 14653 / NBRC 101360 / PT) (Methanosaeta thermophila).